Here is a 127-residue protein sequence, read N- to C-terminus: KP4 killer toxin (127 aa).

A signal peptide spans 1-22; sequence MQIINVVYSFLFAAAMLPVVHS. 5 disulfides stabilise this stretch: C27/C100, C33/C103, C49/C89, C57/C82, and C66/C127.

Monomer.

The protein localises to the secreted. Its function is as follows. This protein is lethal to sensitive cells of the same or related species. It specifically inhibits voltage-gated calcium channels. It inhibits cell growth and division by blocking calcium import. The protein is KP4 killer toxin (M2A) of Mycosarcoma maydis (Corn smut fungus).